The sequence spans 144 residues: Large ribosomal subunit protein uL11 (144 aa).

It belongs to the universal ribosomal protein uL11 family. Part of the ribosomal stalk of the 50S ribosomal subunit. Interacts with L10 and the large rRNA to form the base of the stalk. L10 forms an elongated spine to which L12 dimers bind in a sequential fashion forming a multimeric L10(L12)X complex. Post-translationally, one or more lysine residues are methylated.

Forms part of the ribosomal stalk which helps the ribosome interact with GTP-bound translation factors. This is Large ribosomal subunit protein uL11 from Rhodococcus erythropolis (strain PR4 / NBRC 100887).